Reading from the N-terminus, the 678-residue chain is Protein CASP (678 aa).

Over 1–619 the chain is Cytoplasmic; sequence MAANVGSMFQ…LVLSNKMART (619 aa). Coiled coils occupy residues 67–450 and 502–556; these read LLKS…QDLS and LSII…FLQS. Phosphoserine is present on Ser586. A helical; Anchor for type IV membrane protein membrane pass occupies residues 620 to 640; it reads IGFFYTLFLHCLVFLVLYKLA. Residues 641–678 lie on the Lumenal side of the membrane; it reads WSESMERDCATFCAKKFADHLHKFHENDNGAAAGDLWQ.

Belongs to the CASP family. Homodimer; disulfide-linked. Interacts with GOLGA5.

It localises to the golgi apparatus membrane. Its function is as follows. May be involved in intra-Golgi retrograde transport. This is Protein CASP (CUX1) from Homo sapiens (Human).